The primary structure comprises 207 residues: Small ribosomal subunit protein uS10m (207 aa).

The transit peptide at 1–14 (MNMFRQAVRSFVRY) directs the protein to the mitochondrion.

Belongs to the universal ribosomal protein uS10 family. As to quaternary structure, part of the mitochondrial small ribosomal subunit.

It is found in the mitochondrion. Functionally, involved in mitochondrial genome encoded proteins translation. Involved in the binding of tRNA to the ribosomes. The chain is Small ribosomal subunit protein uS10m (RSM10) from Kluyveromyces lactis (strain ATCC 8585 / CBS 2359 / DSM 70799 / NBRC 1267 / NRRL Y-1140 / WM37) (Yeast).